Reading from the N-terminus, the 868-residue chain is Transcription factor pynR (868 aa).

The zn(2)-C6 fungal-type DNA-binding region spans 11 to 37; sequence CTFCRTRKIACSGERICNACRSRSIEC. 4 disordered regions span residues 51-88, 662-683, 715-761, and 829-868; these read NKTT…TSAV, LSGS…LDLS, SGIP…ASDL, and GMGE…GMSN. Composition is skewed to low complexity over residues 663–683 and 715–727; these read SGSR…LDLS and SGIP…SISH.

It localises to the nucleus. Transcription factor that regulates the expression of the gene cluster that mediates the biosynthesis of pyranonigrins, a family of antioxidative compounds. This is Transcription factor pynR from Aspergillus niger (strain ATCC MYA-4892 / CBS 513.88 / FGSC A1513).